Reading from the N-terminus, the 269-residue chain is UPF0354 protein YtpQ (269 aa).

The protein belongs to the UPF0354 family.

This chain is UPF0354 protein YtpQ (ytpQ), found in Bacillus subtilis (strain 168).